The chain runs to 369 residues: 3-dehydroquinate synthase (369 aa).

NAD(+)-binding positions include 80 to 85 (DGEQYK), 114 to 118 (GVIGD), 138 to 139 (TT), K151, K160, and 178 to 181 (TLKT). E193, H256, and H273 together coordinate Zn(2+).

The protein belongs to the sugar phosphate cyclases superfamily. Dehydroquinate synthase family. The cofactor is Co(2+). It depends on Zn(2+) as a cofactor. Requires NAD(+) as cofactor.

It localises to the cytoplasm. It catalyses the reaction 7-phospho-2-dehydro-3-deoxy-D-arabino-heptonate = 3-dehydroquinate + phosphate. It participates in metabolic intermediate biosynthesis; chorismate biosynthesis; chorismate from D-erythrose 4-phosphate and phosphoenolpyruvate: step 2/7. Its function is as follows. Catalyzes the conversion of 3-deoxy-D-arabino-heptulosonate 7-phosphate (DAHP) to dehydroquinate (DHQ). This Psychrobacter cryohalolentis (strain ATCC BAA-1226 / DSM 17306 / VKM B-2378 / K5) protein is 3-dehydroquinate synthase.